The sequence spans 425 residues: MNTDNASLYVKWLKQEVAPALGCTEPVAISFAAAYAAQYLDQPCTKISGFISANLYKNAMGVTIPGTTVCGVPLAAAIGAFGGDPQKGLKTLEDITPQHVEMAQKLIANNAVDIAVEETPDFIHLDLTLSAGDNCCRVVVKGTHTNVVELYINGQPQPLSEKQNTRTQRETLPTFSLQQAYDFINRVDFNDIRFILDAARLNSALAAEGKTKKYGLNINGTFSDAVKNGLMSNDLLSKVIINTVAASDARMGGAPVVAMSNFGSGNQGITATMPVVVVAEHLGVDEETLARALSLSHLTAISIHSRYTRLSALCAASTAAMGAAAGMAWLFTRDINTINTAIINMISDITGMICDGASNSCAMKVSSVVSSAFKAVLMAMQNSCAGANDGIVCADVEQTINNLCRLVIKPMTLTDKEIISIMVAK.

The protein belongs to the UPF0597 family.

This Klebsiella pneumoniae subsp. pneumoniae (strain ATCC 700721 / MGH 78578) protein is UPF0597 protein KPN78578_43500.